A 94-amino-acid polypeptide reads, in one-letter code: MFTINAEVRKEQGKGASRRLRAANKFPAIIYGGSEAPIAIELDHDQVMNMQAKAEFYSEVLTLVVDGKEVKVKAQAVQRHAYKPKLTHIDFVRA.

This sequence belongs to the bacterial ribosomal protein bL25 family. In terms of assembly, part of the 50S ribosomal subunit; part of the 5S rRNA/L5/L18/L25 subcomplex. Contacts the 5S rRNA. Binds to the 5S rRNA independently of L5 and L18.

In terms of biological role, this is one of the proteins that binds to the 5S RNA in the ribosome where it forms part of the central protuberance. The chain is Large ribosomal subunit protein bL25 from Salmonella agona (strain SL483).